The primary structure comprises 776 residues: Cullin-1 (776 aa).

An Omega-N-methylarginine modification is found at R63. One can recognise a Cullin neddylation domain in the interval 706–766 (DRKLLIQAAI…IEKEYLERVD (61 aa)). Residue K720 forms a Glycyl lysine isopeptide (Lys-Gly) (interchain with G-Cter in NEDD8) linkage.

This sequence belongs to the cullin family. In terms of assembly, component of multiple Cul1-RING E3 ubiquitin-protein ligase complexes commonly known as SCF (SKP1-CUL1-F-box) complexes, consisting of CUL1, SKP1, RBX1 and a variable F-box domain-containing protein as substrate-specific subunit. Component of the SCF(FBXW11) complex containing FBXW11. Component of the SCF(SKP2) complex containing SKP2, in which it interacts directly with SKP1, SKP2 and RBX1. Component of the SCF(FBXW2) complex containing FBXW2. Component of the SCF(FBXO32) complex containing FBXO32. Component of the probable SCF(FBXO7) complex containing FBXO7. Component of the SCF(FBXO10) complex containing FBXO10. Component of the SCF(FBXO11) complex containing FBXO11. Component of the SCF(FBXO25) complex containing FBXO25. Component of the SCF(FBXO33) complex containing FBXO33. Component of the probable SCF(FBXO4) complex containing FBXO4. Component of the SCF(FBXO44) complex, composed of SKP1, CUL1 and FBXO44. Component of the SCF(BTRC) complex, composed of SKP1, CUL1 and BTRC. This complex binds phosphorylated NFKBIA. Part of a SCF complex consisting of CUL1, RBX1, SKP1 and FBXO2. Component of a SCF(SKP2)-like complex containing CUL1, SKP1, TRIM21 and SKP2. Component of the SCF(FBXO17) complex, composed of SKP1, CUL1 and FBXO17. Component of the SCF(FBXO27) complex, composed of SKP1, CUL1 and FBXO27. Component of the SCF(CCNF) complex consisting of CUL1, RBX1, SKP1 and CCNF. Interacts with CCNF. Component of the SCF(FBXL3) complex composed of CUL1, SKP1, RBX1 and FBXL3. Component of the SCF(FBXL21) complex composed of CUL1, SKP1, RBX1 and FBXL21. Component of the SCF(FBXO9) composed of CUL1, SKP1, RBX1 and FBXO9. Component of the SCF(FBXW7) composed of CUL1, SKP1, RBX1 and FBXW7. Component of the SCF(FBXO31) complex composed of CUL1, SKP1, RBX1 and FBXO31. Interacts with CHEK2; mediates CHEK2 ubiquitination and regulates its function. Part of a complex with TIP120A/CAND1 and RBX1. The unneddylated form interacts with TIP120A/CAND1 and the interaction mediates the exchange of the F-box substrate-specific subunit. Can self-associate. Interacts with FBXW8. Interacts with RNF7. Interacts with TRIM21. Interacts with COPS2. Interacts with UBE2M. Identified in a complex with RBX1 and GLMN. Interacts with CEP68 as part of the SCF(FBXW11) complex; the interaction is probably mediated by FBXW11 and the complex also contains CDK5RAP2 and PCNT. Interacts (when neddylated) with ARIH1; leading to activate the E3 ligase activity of ARIH1. Interacts with COPS9 isoform 2. Interacts with UBXN1. Interacts with KAT7, probably as part of an SCF complex; the interaction mediates KAT7 ubiquitination. Interacts with NOTCH2. Part of a complex that contains DCUN1D5, CUL1 and RBX1; this complex is bridged by CUL1. Interacts (unneddylated form) with DCUN1D1, DCUN1D2, DCUN1D3, DCUN1D4 and DCUN1D5; these interactions promote the cullin neddylation. Interacts (via the C-terminal domain) with CUL7; the interaction seems to be mediated by FBXW8; it is likely specific to FBXW8, but not other F-box proteins. Interacts with UBR2, as part of SCF(BTRC) complex; the interaction mediates 'Lys-48'-linked ubiquitination of UBR2 and is regulated by DUSP22 in the T-cell receptor signaling pathway. (Microbial infection) Interacts with Epstein-Barr virus BPLF1. As to quaternary structure, (Microbial infection) Interacts with Human adenovirus early E1A protein; this interaction inhibits RBX1-CUL1-dependent elongation reaction of ubiquitin chains by the SCF(FBXW7) complex. In terms of assembly, (Microbial infection) Interacts with vaccinia virus protein C9L. (Microbial infection) Interacts with Epstein-Barr virus (EBV) tegument protein BGLF2; this interaction might facilitate CUL1 recruitment to STAT2, leading to ubiquitination and degradation of the latter. In terms of processing, neddylated; which enhances the ubiquitination activity of SCF. Neddylation prevents binding of the inhibitor CAND1. Neddylation leads to structural rearrangment in the complex that allows interaction between the E2 ubiquitin-conjugating enzyme and the acceptor ubiquitin. Deneddylated via its interaction with the COP9 signalosome (CSN) complex. (Microbial infection) Deneddylated by Epstein-Barr virus BPLF1 leading to a S-phase-like environment that is required for efficient replication of the viral genome. As to expression, expressed in lung fibroblasts.

Its pathway is protein modification; protein ubiquitination. In terms of biological role, core component of multiple cullin-RING-based SCF (SKP1-CUL1-F-box protein) E3 ubiquitin-protein ligase complexes, which mediate the ubiquitination of proteins involved in cell cycle progression, signal transduction and transcription. SCF complexes and ARIH1 collaborate in tandem to mediate ubiquitination of target proteins. In the SCF complex, serves as a rigid scaffold that organizes the SKP1-F-box protein and RBX1 subunits. May contribute to catalysis through positioning of the substrate and the ubiquitin-conjugating enzyme. The E3 ubiquitin-protein ligase activity of the complex is dependent on the neddylation of the cullin subunit and exchange of the substrate recognition component is mediated by TIP120A/CAND1. The functional specificity of the SCF complex depends on the F-box protein as substrate recognition component. SCF(BTRC) and SCF(FBXW11) direct ubiquitination of CTNNB1 and participate in Wnt signaling. SCF(FBXW11) directs ubiquitination of phosphorylated NFKBIA. SCF(BTRC) directs ubiquitination of NFKBIB, NFKBIE, ATF4, SMAD3, SMAD4, CDC25A, FBXO5 and probably NFKB2. SCF(BTRC) and/or SCF(FBXW11) direct ubiquitination of CEP68. SCF(SKP2) directs ubiquitination of phosphorylated CDKN1B/p27kip and is involved in regulation of G1/S transition. SCF(SKP2) directs ubiquitination of ORC1, CDT1, RBL2, ELF4, CDKN1A, RAG2, FOXO1A, and probably MYC and TAL1. SCF(FBXW7) directs ubiquitination of CCNE1, NOTCH1 released notch intracellular domain (NICD), and probably PSEN1. SCF(FBXW2) directs ubiquitination of GCM1. SCF(FBXO32) directs ubiquitination of MYOD1. SCF(FBXO7) directs ubiquitination of BIRC2 and DLGAP5. SCF(FBXO33) directs ubiquitination of YBX1. SCF(FBXO1) directs ubiquitination of BCL6 and DTL but does not seem to direct ubiquitination of TP53. SCF(BTRC) mediates the ubiquitination of NFKBIA at 'Lys-21' and 'Lys-22'; the degradation frees the associated NFKB1-RELA dimer to translocate into the nucleus and to activate transcription. SCF(CCNF) directs ubiquitination of CCP110. SCF(FBXL3) and SCF(FBXL21) direct ubiquitination of CRY1 and CRY2. SCF(FBXO9) directs ubiquitination of TTI1 and TELO2. SCF(FBXO10) directs ubiquitination of BCL2. Neddylated CUL1-RBX1 ubiquitinates p53/TP53 recruited by Cul7-RING(FBXW8) complex. SCF(BTRC) directs 'Lys-48'-linked ubiquitination of UBR2 in the T-cell receptor signaling pathway. The SCF(FBXO31) protein ligase complex specifically mediates the ubiquitination of proteins amidated at their C-terminus in response to oxidative stress. The sequence is that of Cullin-1 (CUL1) from Homo sapiens (Human).